The chain runs to 500 residues: 4-aminobutyrate aminotransferase, mitochondrial (500 aa).

Residues 1–28 (MAFLLITRRLACSSQKNLHLFIPGSRYI) constitute a mitochondrion transit peptide. Residue Cys-163 participates in [2Fe-2S] cluster binding. 164 to 165 (GS) contacts pyridoxal 5'-phosphate. Cys-166 is a binding site for [2Fe-2S] cluster. Arg-220 contributes to the substrate binding site. Lys-231 is subject to N6-succinyllysine. N6-acetyllysine; alternate is present on Lys-252. N6-succinyllysine; alternate is present on Lys-252. Residues Lys-279 and Lys-318 each carry the N6-acetyllysine modification. At Lys-357 the chain carries N6-(pyridoxal phosphate)lysine. Thr-381 lines the pyridoxal 5'-phosphate pocket. N6-acetyllysine; alternate is present on Lys-413. Lys-413 carries the post-translational modification N6-succinyllysine; alternate. Lys-452 and Lys-470 each carry N6-acetyllysine.

Belongs to the class-III pyridoxal-phosphate-dependent aminotransferase family. As to quaternary structure, homodimer; disulfide-linked. It depends on pyridoxal 5'-phosphate as a cofactor. [2Fe-2S] cluster is required as a cofactor.

The protein localises to the mitochondrion matrix. The enzyme catalyses 4-aminobutanoate + 2-oxoglutarate = succinate semialdehyde + L-glutamate. The catalysed reaction is (S)-3-amino-2-methylpropanoate + 2-oxoglutarate = 2-methyl-3-oxopropanoate + L-glutamate. In terms of biological role, catalyzes the conversion of gamma-aminobutyrate and L-beta-aminoisobutyrate to succinate semialdehyde and methylmalonate semialdehyde, respectively. Can also convert delta-aminovalerate and beta-alanine. This chain is 4-aminobutyrate aminotransferase, mitochondrial, found in Mus musculus (Mouse).